Consider the following 278-residue polypeptide: MAIRFYRDYTPGARDRLVVSSSEGTVRFKPQKKLISGFTCRKGRNNRGIITSRHRGGGHKRLYRQIDFRRSKRGISGRIVTVEYDPNRNAYICLVHYEDGEKKYILHPGGIKIGDTIISGPMATILIGNALPLTNMPLGTTIHNVEITPGRGGQLARAAGTAAKLIAKEGRLATSRLPSGEVRLISQNCLATVGQVGNVDDNNRTLGKAGSKRWLGKRPKVRGVVMNPVDHPHGGGEGRAPIGRKKPLTPWGHTALGGRSRKNHKYSDTLILRRRRNS.

Residues 224 to 267 are disordered; that stretch reads VVMNPVDHPHGGGEGRAPIGRKKPLTPWGHTALGGRSRKNHKYS.

This sequence belongs to the universal ribosomal protein uL2 family. As to quaternary structure, part of the 50S ribosomal subunit.

It localises to the plastid. The protein resides in the chloroplast. This Huperzia lucidula (Shining clubmoss) protein is Large ribosomal subunit protein uL2c (rpl2).